Reading from the N-terminus, the 211-residue chain is Endonuclease YncB (211 aa).

The signal sequence occupies residues 1–19 (MKKILISMIAIVLSITLAA). A lipid anchor (N-palmitoyl cysteine) is attached at Cys20. Cys20 carries S-diacylglycerol cysteine lipidation. Residues 24–63 (HAAKNHSDSNGTEQVSQDTHSNEYNQTEQKAGTPHSKNQK) form a disordered region. Residues 31 to 53 (DSNGTEQVSQDTHSNEYNQTEQK) show a composition bias toward polar residues. The region spanning 64–197 (KLVNVTLDRA…KSDKLSIWSK (134 aa)) is the TNase-like domain. Asp77 contacts Ca(2+). The active site involves Arg91. Residues Asp96 and Thr97 each contribute to the Ca(2+) site. Active-site residues include Glu99 and Arg142.

This sequence belongs to the thermonuclease family. Ca(2+) is required as a cofactor.

It is found in the cell membrane. With respect to regulation, inhibited by aurintricalboxylic acid but not by Zn(2+). Functionally, shows DNase activity on double strand DNA. In Bacillus subtilis (strain 168), this protein is Endonuclease YncB (yncB).